We begin with the raw amino-acid sequence, 567 residues long: Protein NRT1/ PTR FAMILY 4.5 (567 aa).

12 helical membrane-spanning segments follow: residues 30-50, 70-92, 99-118, 147-167, 189-209, 219-239, 326-346, 374-394, 411-431, 448-468, 491-511, and 535-555; these read GMLAASFVLAVEILENLAFLA, SSSEVTTFMATAFLLALLGGFLA, FVIFLISASIEFLGLILLTI, AFLFVGLYLVSLGIGGIKGSL, FFNYYVFCLSCGALVAVTFVV, WGFGVSTISIFLSILVFLLGS, IVLKMLPIFGCTIMLNCCLAQ, VFPVVFMLILAPTYDHLIIPF, IGVGLVLSIVAMAVAALVELK, LPITFLWIALQYLFLGSADLF, SLSWASLALGYYLSSVMVPIV, and LFYWLMCVLSVVNFLHYLFWA.

Belongs to the major facilitator superfamily. Proton-dependent oligopeptide transporter (POT/PTR) (TC 2.A.17) family. In terms of tissue distribution, expressed in flowers and siliques.

It is found in the membrane. In terms of biological role, involved in abscisic acid transport. This chain is Protein NRT1/ PTR FAMILY 4.5 (NPF4.5), found in Arabidopsis thaliana (Mouse-ear cress).